Consider the following 415-residue polypeptide: Gamma-glutamyl phosphate reductase (415 aa).

Belongs to the gamma-glutamyl phosphate reductase family.

The protein localises to the cytoplasm. It carries out the reaction L-glutamate 5-semialdehyde + phosphate + NADP(+) = L-glutamyl 5-phosphate + NADPH + H(+). Its pathway is amino-acid biosynthesis; L-proline biosynthesis; L-glutamate 5-semialdehyde from L-glutamate: step 2/2. Its function is as follows. Catalyzes the NADPH-dependent reduction of L-glutamate 5-phosphate into L-glutamate 5-semialdehyde and phosphate. The product spontaneously undergoes cyclization to form 1-pyrroline-5-carboxylate. This chain is Gamma-glutamyl phosphate reductase, found in Mycobacterium bovis (strain BCG / Pasteur 1173P2).